Here is a 487-residue protein sequence, read N- to C-terminus: Glycogen synthase (487 aa).

An ADP-alpha-D-glucose-binding site is contributed by K19.

The protein belongs to the glycosyltransferase 1 family. Bacterial/plant glycogen synthase subfamily.

It carries out the reaction [(1-&gt;4)-alpha-D-glucosyl](n) + ADP-alpha-D-glucose = [(1-&gt;4)-alpha-D-glucosyl](n+1) + ADP + H(+). It functions in the pathway glycan biosynthesis; glycogen biosynthesis. Synthesizes alpha-1,4-glucan chains using ADP-glucose. In Moorella thermoacetica (strain ATCC 39073 / JCM 9320), this protein is Glycogen synthase.